Consider the following 571-residue polypeptide: Proline--tRNA ligase (571 aa).

It belongs to the class-II aminoacyl-tRNA synthetase family. ProS type 1 subfamily. In terms of assembly, homodimer.

Its subcellular location is the cytoplasm. The enzyme catalyses tRNA(Pro) + L-proline + ATP = L-prolyl-tRNA(Pro) + AMP + diphosphate. Its function is as follows. Catalyzes the attachment of proline to tRNA(Pro) in a two-step reaction: proline is first activated by ATP to form Pro-AMP and then transferred to the acceptor end of tRNA(Pro). As ProRS can inadvertently accommodate and process non-cognate amino acids such as alanine and cysteine, to avoid such errors it has two additional distinct editing activities against alanine. One activity is designated as 'pretransfer' editing and involves the tRNA(Pro)-independent hydrolysis of activated Ala-AMP. The other activity is designated 'posttransfer' editing and involves deacylation of mischarged Ala-tRNA(Pro). The misacylated Cys-tRNA(Pro) is not edited by ProRS. The sequence is that of Proline--tRNA ligase from Shewanella baltica (strain OS155 / ATCC BAA-1091).